The primary structure comprises 1147 residues: Multiple epidermal growth factor-like domains protein 10 (1147 aa).

The N-terminal stretch at Met-1–Ser-25 is a signal peptide. Residues Met-1 to Gly-857 form a necessary for interaction with AP2M1, self-assembly and formation of the irregular, mosaic-like adhesion pattern region. Residues Leu-26–Gly-857 are Extracellular-facing. Positions Asp-30 to Pro-107 constitute an EMI domain. Cystine bridges form between Cys-34-Cys-95, Cys-60-Cys-69, Cys-94-Cys-105, Cys-109-Cys-124, Cys-126-Cys-135, Cys-148-Cys-160, Cys-154-Cys-167, Cys-169-Cys-178, Cys-191-Cys-203, Cys-197-Cys-210, Cys-212-Cys-221, Cys-234-Cys-246, Cys-240-Cys-253, Cys-255-Cys-264, Cys-281-Cys-289, Cys-283-Cys-296, Cys-298-Cys-307, Cys-320-Cys-332, Cys-326-Cys-339, Cys-341-Cys-350, Cys-409-Cys-421, Cys-415-Cys-428, Cys-430-Cys-439, Cys-456-Cys-464, Cys-458-Cys-471, Cys-473-Cys-482, Cys-495-Cys-507, Cys-501-Cys-514, Cys-516-Cys-525, Cys-542-Cys-550, Cys-544-Cys-557, Cys-559-Cys-568, Cys-581-Cys-593, Cys-587-Cys-600, Cys-602-Cys-611, Cys-669-Cys-681, Cys-675-Cys-688, Cys-690-Cys-699, Cys-716-Cys-724, Cys-718-Cys-731, Cys-733-Cys-742, Cys-755-Cys-767, Cys-761-Cys-774, Cys-776-Cys-785, Cys-802-Cys-810, Cys-804-Cys-817, and Cys-819-Cys-828. EGF-like domains are found at residues Ser-101–Ser-136, Trp-144–Glu-179, Tyr-187–Glu-222, His-230–Gly-265, Ser-278–Gln-308, Tyr-316–Glu-351, Tyr-405–Ser-440, Ser-453–Ser-483, Trp-491–Glu-526, Ala-539–Asp-569, Trp-577–Gln-612, Phe-665–Ser-700, Ile-713–Thr-743, Tyr-751–Glu-786, and Arg-799–Asp-829. Asn-134 carries an N-linked (GlcNAc...) asparagine glycan. An N-linked (GlcNAc...) asparagine glycan is attached at Asn-496. The chain crosses the membrane as a helical span at residues Ala-858 to Ile-878. At Tyr-879–Glu-1147 the chain is on the cytoplasmic side. The tract at residues Arg-945 to Glu-1147 is necessary for formation of large intracellular vacuoles. A Phosphotyrosine modification is found at Tyr-1030. Residues His-1093–Glu-1147 form a disordered region. A compositionally biased stretch (low complexity) spans Asn-1132–Glu-1147.

It belongs to the MEGF family. As to quaternary structure, homomer. Interacts with GULP1 and ABCA1. Interacts with AP2M1. Does not interact with MEGF11. Binds with high affinity to complement C1q. Interacts (via the cytoplasmic domain) with NOTCH1 (via NICD domain). Ubiquitinated; mono- and polyubiquitinated forms are detected. Post-translationally, phosphorylated on tyrosine residues. Phosphorylation at Tyr-1030 may be important for muscle cell proliferation. In terms of tissue distribution, expressed in cerebellum (at protein level). Expressed in kidney, stellate cells of the cerebellum and macrophage cell lines.

It is found in the cell membrane. Its subcellular location is the cell projection. The protein resides in the phagocytic cup. In terms of biological role, membrane receptor involved in phagocytosis by macrophages and astrocytes of apoptotic cells. Receptor for C1q, an eat-me signal, that binds phosphatidylserine expressed on the surface of apoptotic cells. Cooperates with ABCA1 within the process of engulfment. Promotes the formation of large intracellular vacuoles and may be responsible for the uptake of amyloid-beta peptides. Necessary for astrocyte-dependent apoptotic neuron clearance in the developing cerebellum. Plays a role in muscle cell proliferation, adhesion and motility. Is also an essential factor in the regulation of myogenesis. Controls the balance between skeletal muscle satellite cells proliferation and differentiation through regulation of the notch signaling pathway. May also function in the mosaic spacing of specific neuron subtypes in the retina through homotypic retinal neuron repulsion. Mosaics provide a mechanism to distribute each cell type evenly across the retina, ensuring that all parts of the visual field have access to a full set of processing elements. The chain is Multiple epidermal growth factor-like domains protein 10 from Mus musculus (Mouse).